The sequence spans 125 residues: UPF0231 protein HD_1708 (125 aa).

This sequence belongs to the UPF0231 family.

This chain is UPF0231 protein HD_1708, found in Haemophilus ducreyi (strain 35000HP / ATCC 700724).